The primary structure comprises 248 residues: Probable transcriptional regulatory protein MYPE8020 (248 aa).

Belongs to the TACO1 family.

The protein localises to the cytoplasm. This is Probable transcriptional regulatory protein MYPE8020 from Malacoplasma penetrans (strain HF-2) (Mycoplasma penetrans).